Consider the following 829-residue polypeptide: Trimethylamine-N-oxide reductase (829 aa).

The tat-type signal signal peptide spans 1–31; sequence MNRRDFLKGIASSSFVVLGGSSVLTPLNALA. Ser-180 provides a ligand contact to Mo-bis(molybdopterin guanine dinucleotide).

Belongs to the prokaryotic molybdopterin-containing oxidoreductase family. Mo-bis(molybdopterin guanine dinucleotide) is required as a cofactor. Post-translationally, predicted to be exported by the Tat system. The position of the signal peptide cleavage has been experimentally proven.

Its subcellular location is the periplasm. The catalysed reaction is trimethylamine + 2 Fe(III)-[cytochrome c] + H2O = trimethylamine N-oxide + 2 Fe(II)-[cytochrome c] + 3 H(+). Functionally, reduces trimethylamine-N-oxide (TMAO) into trimethylamine; an anaerobic reaction coupled to energy-yielding reactions. The protein is Trimethylamine-N-oxide reductase (torA) of Shewanella massilia.